A 264-amino-acid polypeptide reads, in one-letter code: S-adenosylmethionine decarboxylase proenzyme (264 aa).

Ser-113 functions as the Schiff-base intermediate with substrate; via pyruvic acid in the catalytic mechanism. Residue Ser-113 is modified to Pyruvic acid (Ser); by autocatalysis. His-118 serves as the catalytic Proton acceptor; for processing activity. Cys-141 (proton donor; for catalytic activity) is an active-site residue.

Belongs to the prokaryotic AdoMetDC family. Type 2 subfamily. In terms of assembly, heterooctamer of four alpha and four beta chains arranged as a tetramer of alpha/beta heterodimers. Requires pyruvate as cofactor. In terms of processing, is synthesized initially as an inactive proenzyme. Formation of the active enzyme involves a self-maturation process in which the active site pyruvoyl group is generated from an internal serine residue via an autocatalytic post-translational modification. Two non-identical subunits are generated from the proenzyme in this reaction, and the pyruvate is formed at the N-terminus of the alpha chain, which is derived from the carboxyl end of the proenzyme. The post-translation cleavage follows an unusual pathway, termed non-hydrolytic serinolysis, in which the side chain hydroxyl group of the serine supplies its oxygen atom to form the C-terminus of the beta chain, while the remainder of the serine residue undergoes an oxidative deamination to produce ammonia and the pyruvoyl group blocking the N-terminus of the alpha chain.

It catalyses the reaction S-adenosyl-L-methionine + H(+) = S-adenosyl 3-(methylsulfanyl)propylamine + CO2. It functions in the pathway amine and polyamine biosynthesis; S-adenosylmethioninamine biosynthesis; S-adenosylmethioninamine from S-adenosyl-L-methionine: step 1/1. Its function is as follows. Catalyzes the decarboxylation of S-adenosylmethionine to S-adenosylmethioninamine (dcAdoMet), the propylamine donor required for the synthesis of the polyamines spermine and spermidine from the diamine putrescine. This is S-adenosylmethionine decarboxylase proenzyme from Azotobacter vinelandii (strain DJ / ATCC BAA-1303).